Reading from the N-terminus, the 189-residue chain is Ribose 1,5-bisphosphate phosphokinase PhnN (189 aa).

Position 10 to 17 (10 to 17 (GPSGSGKD)) interacts with ATP.

Belongs to the ribose 1,5-bisphosphokinase family.

It carries out the reaction alpha-D-ribose 1,5-bisphosphate + ATP = 5-phospho-alpha-D-ribose 1-diphosphate + ADP. Its pathway is metabolic intermediate biosynthesis; 5-phospho-alpha-D-ribose 1-diphosphate biosynthesis; 5-phospho-alpha-D-ribose 1-diphosphate from D-ribose 5-phosphate (route II): step 3/3. In terms of biological role, catalyzes the phosphorylation of ribose 1,5-bisphosphate to 5-phospho-D-ribosyl alpha-1-diphosphate (PRPP). This is Ribose 1,5-bisphosphate phosphokinase PhnN from Enterobacter lignolyticus (strain SCF1).